A 339-amino-acid chain; its full sequence is N-acetyl-gamma-glutamyl-phosphate reductase (339 aa).

Cysteine 145 is a catalytic residue.

It belongs to the NAGSA dehydrogenase family. Type 1 subfamily.

The protein localises to the cytoplasm. It carries out the reaction N-acetyl-L-glutamate 5-semialdehyde + phosphate + NADP(+) = N-acetyl-L-glutamyl 5-phosphate + NADPH + H(+). The protein operates within amino-acid biosynthesis; L-arginine biosynthesis; N(2)-acetyl-L-ornithine from L-glutamate: step 3/4. Functionally, catalyzes the NADPH-dependent reduction of N-acetyl-5-glutamyl phosphate to yield N-acetyl-L-glutamate 5-semialdehyde. The protein is N-acetyl-gamma-glutamyl-phosphate reductase of Thermotoga maritima (strain ATCC 43589 / DSM 3109 / JCM 10099 / NBRC 100826 / MSB8).